A 450-amino-acid polypeptide reads, in one-letter code: Chromosomal replication initiator protein DnaA (450 aa).

Residues 1–84 (MTENEQIFWN…AVDYVYEDNL (84 aa)) are domain I, interacts with DnaA modulators. Residues 84–109 (LMIEQQHQGQQGYTEQAFQQLPAVQS) form a domain II region. The segment at 110 to 328 (DLNPKYSFDN…GALKDISLVA (219 aa)) is domain III, AAA+ region. Residues Gly154, Gly156, Lys157, and Thr158 each coordinate ATP. Residues 329–450 (NFKQIDTITV…EIETIKNKIK (122 aa)) form a domain IV, binds dsDNA region.

The protein belongs to the DnaA family. Oligomerizes as a right-handed, spiral filament on DNA at oriC.

The protein localises to the cytoplasm. Its function is as follows. Plays an essential role in the initiation and regulation of chromosomal replication. ATP-DnaA binds to the origin of replication (oriC) to initiate formation of the DNA replication initiation complex once per cell cycle. Binds the DnaA box (a 9 base pair repeat at the origin) and separates the double-stranded (ds)DNA. Forms a right-handed helical filament on oriC DNA; dsDNA binds to the exterior of the filament while single-stranded (ss)DNA is stabiized in the filament's interior. The ATP-DnaA-oriC complex binds and stabilizes one strand of the AT-rich DNA unwinding element (DUE), permitting loading of DNA polymerase. After initiation quickly degrades to an ADP-DnaA complex that is not apt for DNA replication. Binds acidic phospholipids. This chain is Chromosomal replication initiator protein DnaA, found in Streptococcus equi subsp. zooepidemicus (strain H70).